Here is an 888-residue protein sequence, read N- to C-terminus: Alanine--tRNA ligase (888 aa).

Zn(2+) is bound by residues H570, H574, C673, and H677.

Belongs to the class-II aminoacyl-tRNA synthetase family. Zn(2+) serves as cofactor.

The protein localises to the cytoplasm. The catalysed reaction is tRNA(Ala) + L-alanine + ATP = L-alanyl-tRNA(Ala) + AMP + diphosphate. Functionally, catalyzes the attachment of alanine to tRNA(Ala) in a two-step reaction: alanine is first activated by ATP to form Ala-AMP and then transferred to the acceptor end of tRNA(Ala). Also edits incorrectly charged Ser-tRNA(Ala) and Gly-tRNA(Ala) via its editing domain. The polypeptide is Alanine--tRNA ligase (Chlorobium phaeobacteroides (strain DSM 266 / SMG 266 / 2430)).